The sequence spans 542 residues: Adenine deaminase (542 aa).

It belongs to the metallo-dependent hydrolases superfamily. Adenine deaminase family. It depends on Mn(2+) as a cofactor.

It catalyses the reaction adenine + H2O + H(+) = hypoxanthine + NH4(+). This Methanosphaera stadtmanae (strain ATCC 43021 / DSM 3091 / JCM 11832 / MCB-3) protein is Adenine deaminase.